The sequence spans 129 residues: Glycine cleavage system H protein (129 aa).

Residues 24 to 106 (TFTVGISEHA…YGDGWLFRIK (83 aa)) form the Lipoyl-binding domain. The residue at position 65 (Lys-65) is an N6-lipoyllysine.

Belongs to the GcvH family. In terms of assembly, the glycine cleavage system is composed of four proteins: P, T, L and H. (R)-lipoate is required as a cofactor.

Functionally, the glycine cleavage system catalyzes the degradation of glycine. The H protein shuttles the methylamine group of glycine from the P protein to the T protein. The polypeptide is Glycine cleavage system H protein (Idiomarina loihiensis (strain ATCC BAA-735 / DSM 15497 / L2-TR)).